Here is a 637-residue protein sequence, read N- to C-terminus: Early transcription factor 70 kDa subunit (637 aa).

Belongs to the helicase family. VETF subfamily. As to quaternary structure, heterodimer of a 70 kDa and a 82 kDa subunit. Part of the early transcription complex composed of ETF, RAP94/OPG109, and the DNA-directed RNA polymerase. Post-translationally, apparently non-glycosylated.

It localises to the virion. Acts with RNA polymerase to initiate transcription from early gene promoters. Is recruited by the RPO-associated protein of 94 kDa RAP94/OPG109 to form the early transcription complex, which also contains the core RNA polymerase. ETF heterodimer binds to early gene promoters. The sequence is that of Early transcription factor 70 kDa subunit (OPG118) from Monkeypox virus.